Reading from the N-terminus, the 105-residue chain is Heat shock protein HspQ (105 aa).

A disordered region spans residues 77 to 105; sequence MRDEHPEQPSMDELARTIRKQLQAPRLRN.

This sequence belongs to the HspQ family.

It is found in the cytoplasm. Involved in the degradation of certain denaturated proteins, including DnaA, during heat shock stress. The sequence is that of Heat shock protein HspQ from Salmonella arizonae (strain ATCC BAA-731 / CDC346-86 / RSK2980).